A 138-amino-acid chain; its full sequence is Putative nickel-responsive regulator (138 aa).

Positions 78, 89, 91, and 97 each coordinate Ni(2+).

It belongs to the transcriptional regulatory CopG/NikR family. Requires Ni(2+) as cofactor.

In terms of biological role, transcriptional regulator. The polypeptide is Putative nickel-responsive regulator (Thermococcus kodakarensis (strain ATCC BAA-918 / JCM 12380 / KOD1) (Pyrococcus kodakaraensis (strain KOD1))).